The chain runs to 92 residues: Large ribosomal subunit protein eL43 (92 aa).

A C4-type zinc finger spans residues 39–60 (CSFCGKKTVRRGAAGIWSCHSC).

It belongs to the eukaryotic ribosomal protein eL43 family.

The protein is Large ribosomal subunit protein eL43 (RPL43) of Candida glabrata (strain ATCC 2001 / BCRC 20586 / JCM 3761 / NBRC 0622 / NRRL Y-65 / CBS 138) (Yeast).